The sequence spans 312 residues: Malate dehydrogenase (312 aa).

Residues 7–13 (GAAGGIG) and Asp34 contribute to the NAD(+) site. Arg81 and Arg87 together coordinate substrate. NAD(+) is bound by residues Asn94 and 117–119 (ITN). Residues Asn119 and Arg153 each contribute to the substrate site. His177 functions as the Proton acceptor in the catalytic mechanism. Met227 provides a ligand contact to NAD(+).

This sequence belongs to the LDH/MDH superfamily. MDH type 1 family. As to quaternary structure, homodimer.

It catalyses the reaction (S)-malate + NAD(+) = oxaloacetate + NADH + H(+). Catalyzes the reversible oxidation of malate to oxaloacetate. The protein is Malate dehydrogenase of Salmonella agona (strain SL483).